A 280-amino-acid polypeptide reads, in one-letter code: Large ribosomal subunit protein uL2 (280 aa).

Disordered stretches follow at residues Met-1–His-58 and Met-226–Arg-280. Composition is skewed to basic residues over residues Leu-37 to His-58 and Ile-268 to Arg-280.

Belongs to the universal ribosomal protein uL2 family. In terms of assembly, part of the 50S ribosomal subunit. Forms a bridge to the 30S subunit in the 70S ribosome.

One of the primary rRNA binding proteins. Required for association of the 30S and 50S subunits to form the 70S ribosome, for tRNA binding and peptide bond formation. It has been suggested to have peptidyltransferase activity; this is somewhat controversial. Makes several contacts with the 16S rRNA in the 70S ribosome. This Mycobacterium avium (strain 104) protein is Large ribosomal subunit protein uL2.